We begin with the raw amino-acid sequence, 495 residues long: Cytochrome P450 monooxygenase 88 (495 aa).

A helical membrane pass occupies residues 2-22 (FLQIVTSVLATGLLYALISVL). 2 N-linked (GlcNAc...) asparagine glycosylation sites follow: Asn25 and Asn198. Residue Cys428 participates in heme binding.

It belongs to the cytochrome P450 family. It depends on heme as a cofactor.

The protein localises to the membrane. The protein operates within secondary metabolite biosynthesis. Functionally, cytochrome P450 monooxygenase that is able to use 4-ethoxybenzoic acid as a substrate for oxidation. This Postia placenta (strain ATCC 44394 / Madison 698-R) (Brown rot fungus) protein is Cytochrome P450 monooxygenase 88.